The following is a 179-amino-acid chain: Large ribosomal subunit protein uL6 (179 aa).

It belongs to the universal ribosomal protein uL6 family. Part of the 50S ribosomal subunit.

Functionally, this protein binds to the 23S rRNA, and is important in its secondary structure. It is located near the subunit interface in the base of the L7/L12 stalk, and near the tRNA binding site of the peptidyltransferase center. This is Large ribosomal subunit protein uL6 from Metamycoplasma arthritidis (strain 158L3-1) (Mycoplasma arthritidis).